Here is a 1408-residue protein sequence, read N- to C-terminus: ABC multidrug transporter MDR1 (1408 aa).

A compositionally biased stretch (polar residues) spans 79-88 (IAASSDTLRN). The tract at residues 79 to 102 (IAASSDTLRNSPLEKPISNAFSKS) is disordered. The next 2 helical transmembrane spans lie at 147–167 (FAAP…VAAG) and 223–243 (LYLM…MFIW). Residues 157 to 464 (VLGLVLAVAA…LAPELAAVTK (308 aa)) enclose the ABC transmembrane type-1 1 domain. Asparagine 244 is a glycosylation site (N-linked (GlcNAc...) asparagine). The next 4 membrane-spanning stretches (helical) occupy residues 296–316 (KVAL…LAFV), 321–341 (LAGA…IMMT), 408–428 (IMFF…GILV), and 436–456 (GIVI…AMLA). The ABC transporter 1 domain occupies 499–744 (ISFENVKFHY…ENGPYAQLVN (246 aa)). 534–541 (GASGSGKS) lines the ATP pocket. Asparagine 606 is a glycosylation site (N-linked (GlcNAc...) asparagine). Helical transmembrane passes span 838–858 (IIAF…AILF) and 882–902 (LWYF…SAGF). Residues 838-1125 (IIAFIAAICA…VFTFVPDASK (288 aa)) form the ABC transmembrane type-1 2 domain. N-linked (GlcNAc...) asparagine glycosylation occurs at asparagine 934. The next 4 membrane-spanning stretches (helical) occupy residues 952–972 (GLFG…IGGC), 981–999 (LLAL…GGYI), 1072–1092 (GLTF…IIDA), and 1099–1119 (FYTV…VFTF). Residues asparagine 1127 and asparagine 1182 are each glycosylated (N-linked (GlcNAc...) asparagine). The ABC transporter 2 domain maps to 1162–1402 (VRIEGVHFRY…KGGYYELVQM (241 aa)). 1197–1204 (GPSGCGKS) provides a ligand contact to ATP. An N-linked (GlcNAc...) asparagine glycan is attached at asparagine 1404.

This sequence belongs to the ABC transporter superfamily. ABCB family. Multidrug resistance exporter (TC 3.A.1.201) subfamily.

It localises to the cell membrane. It carries out the reaction itraconazole(in) + ATP + H2O = itraconazole(out) + ADP + phosphate + H(+). It catalyses the reaction voriconazole(in) + ATP + H2O = voriconazole(out) + ADP + phosphate + H(+). The catalysed reaction is fluconazole(in) + ATP + H2O = fluconazole(out) + ADP + phosphate + H(+). Its function is as follows. Pleiotropic ABC efflux transporter that confers resistance to structurally and functionally unrelated compounds including azoles such as fluconazole (FLC), itraconazole (ITC), posaconazole (POS), and voriconazole (VRC). This chain is ABC multidrug transporter MDR1, found in Cryptococcus neoformans var. grubii serotype A (strain H99 / ATCC 208821 / CBS 10515 / FGSC 9487) (Filobasidiella neoformans var. grubii).